A 1181-amino-acid chain; its full sequence is Integrin alpha-2 (1181 aa).

Positions 1–29 (MGPERTGAAPLPLLLVLALSQGILNCCLA) are cleaved as a signal peptide. The Extracellular portion of the chain corresponds to 30-1132 (YNVGLPEAKI…KPDEKAEVPT (1103 aa)). 2 FG-GAP repeats span residues 34 to 92 (LPEA…TATC) and 101 to 161 (TSIP…LSAS). Residues Cys83 and Cys92 are joined by a disulfide bond. N-linked (GlcNAc...) asparagine glycans are attached at residues Asn105, Asn112, and Asn343. In terms of domain architecture, VWFA spans 188-365 (WDAVKNFLEK…TLGEQIFSIE (178 aa)). FG-GAP repeat units follow at residues 366-420 (GTVQ…LIFP), 423-475 (AFDQ…ENGN), 477-539 (TVIQ…ILGQ), 540-598 (HQFL…TIRT), and 602-664 (QKIL…FTPE). N-linked (GlcNAc...) asparagine glycosylation is found at Asn432, Asn460, and Asn475. Ca(2+) contacts are provided by Asp499, Asp501, Asp503, Asp507, Asp563, Asn565, Asp567, Asp571, Asp627, Asn629, Asp631, and Asp635. 5 disulfides stabilise this stretch: Cys680-Cys737, Cys789-Cys795, Cys865-Cys876, Cys1019-Cys1050, and Cys1055-Cys1060. Asn699 carries an N-linked (GlcNAc...) asparagine glycan. Asn1057, Asn1074, and Asn1081 each carry an N-linked (GlcNAc...) asparagine glycan. A helical transmembrane segment spans residues 1133–1154 (GVIIGSIIAGILLLLALVAILW). The interval 1155–1161 (KLGFFKR) is interaction with HPS5. Over 1155–1181 (KLGFFKRKYEKMTKNPDEIDETTELSS) the chain is Cytoplasmic. Positions 1157-1161 (GFFKR) match the GFFKR motif motif.

This sequence belongs to the integrin alpha chain family. Heterodimer of an alpha and a beta subunit. Alpha-2 associates with beta-1. Interacts with HPS5 and RAB21. As to quaternary structure, (Microbial infection) Integrin ITGA2:ITGB1 interacts (via ITAG2 I-domain) with rotavirus A VP4 protein. In terms of assembly, (Microbial infection) Integrin ITGA2:ITGB1 interacts with human echoviruses 1 and 8 capsid proteins.

Its subcellular location is the membrane. Integrin alpha-2/beta-1 is a receptor for laminin, collagen, collagen C-propeptides, fibronectin and E-cadherin. It recognizes the proline-hydroxylated sequence G-F-P-G-E-R in collagen. It is responsible for adhesion of platelets and other cells to collagens, modulation of collagen and collagenase gene expression, force generation and organization of newly synthesized extracellular matrix. Functionally, (Microbial infection) Integrin ITGA2:ITGB1 acts as a receptor for Human rotavirus A. Its function is as follows. (Microbial infection) Integrin ITGA2:ITGB1 acts as a receptor for Human echoviruses 1 and 8. In Homo sapiens (Human), this protein is Integrin alpha-2 (ITGA2).